A 319-amino-acid chain; its full sequence is Acetyl-coenzyme A carboxylase carboxyl transferase subunit alpha (319 aa).

Positions 39–296 (EINRLRSKSI…KTQLLLDLTE (258 aa)) constitute a CoA carboxyltransferase C-terminal domain.

This sequence belongs to the AccA family. Acetyl-CoA carboxylase is a heterohexamer composed of biotin carboxyl carrier protein (AccB), biotin carboxylase (AccC) and two subunits each of ACCase subunit alpha (AccA) and ACCase subunit beta (AccD).

Its subcellular location is the cytoplasm. It carries out the reaction N(6)-carboxybiotinyl-L-lysyl-[protein] + acetyl-CoA = N(6)-biotinyl-L-lysyl-[protein] + malonyl-CoA. It functions in the pathway lipid metabolism; malonyl-CoA biosynthesis; malonyl-CoA from acetyl-CoA: step 1/1. Functionally, component of the acetyl coenzyme A carboxylase (ACC) complex. First, biotin carboxylase catalyzes the carboxylation of biotin on its carrier protein (BCCP) and then the CO(2) group is transferred by the carboxyltransferase to acetyl-CoA to form malonyl-CoA. The polypeptide is Acetyl-coenzyme A carboxylase carboxyl transferase subunit alpha (Blochmanniella pennsylvanica (strain BPEN)).